The sequence spans 391 residues: L-tryptophan--pyruvate aminotransferase 1 (391 aa).

Pyridoxal 5'-phosphate contacts are provided by residues Tyr-58, 100 to 101 (ST), Asn-168, 191 to 194 (DFAY), 214 to 217 (TFSK), and Arg-225. An N6-(pyridoxal phosphate)lysine modification is found at Lys-217.

This sequence belongs to the alliinase family. Pyridoxal 5'-phosphate is required as a cofactor. In terms of tissue distribution, expressed at the leaf margin and in the vasculature of emerging young leaves. Expressed in the quiescent center and in the vasculature of root tips. Detected in the shoot apical meristem, stems, sepals, stamen filaments, the shoot and root junction, the stigma and the base of the silique.

The protein resides in the cytoplasm. It carries out the reaction L-tryptophan + 2-oxoglutarate = indole-3-pyruvate + L-glutamate. The enzyme catalyses L-tryptophan + pyruvate = indole-3-pyruvate + L-alanine. The protein operates within plant hormone metabolism; auxin biosynthesis. Its activity is regulated as follows. Inhibited by L-kynurenine. L-tryptophan aminotransferase involved in auxin (IAA) biosynthesis. Can convert L-tryptophan and pyruvate to indole-3-pyruvic acid (IPA) and alanine. Catalyzes the first step in IPA branch of the auxin biosynthetic pathway. Required for auxin production to initiate multiple change in growth in response to environmental and developmental cues. It is also active with phenylalanine, tyrosine, leucine, alanine, methionine and glutamine. Both TAA1 and TAR2 are required for maintaining proper auxin levels in roots, while TAA1, TAR1 and TAR2 are required for proper embryo patterning. Involved in the maintenance of the root stem cell niches and required for shade avoidance. This is L-tryptophan--pyruvate aminotransferase 1 (TAA1) from Arabidopsis thaliana (Mouse-ear cress).